The chain runs to 114 residues: T cell receptor beta variable 6-1 (114 aa).

Residues 1-21 form the signal peptide; the sequence is MSIGLLCCVAFSLLWASPVNA. The Ig-like domain occupies 22 to 114; it reads GVTQTPKFQV…TSVYFCASSE (93 aa). A disulfide bridge links cysteine 42 with cysteine 110. Residue asparagine 84 is glycosylated (N-linked (GlcNAc...) asparagine).

As to quaternary structure, alpha-beta TR is a heterodimer composed of an alpha and beta chain; disulfide-linked. The alpha-beta TR is associated with the transmembrane signaling CD3 coreceptor proteins to form the TR-CD3 (TcR or TCR). The assembly of alpha-beta TR heterodimers with CD3 occurs in the endoplasmic reticulum where a single alpha-beta TR heterodimer associates with one CD3D-CD3E heterodimer, one CD3G-CD3E heterodimer and one CD247 homodimer forming a stable octameric structure. CD3D-CD3E and CD3G-CD3E heterodimers preferentially associate with TR alpha and TR beta chains, respectively. The association of the CD247 homodimer is the last step of TcR assembly in the endoplasmic reticulum and is required for transport to the cell surface.

It localises to the cell membrane. In terms of biological role, v region of the variable domain of T cell receptor (TR) beta chain that participates in the antigen recognition. Alpha-beta T cell receptors are antigen specific receptors which are essential to the immune response and are present on the cell surface of T lymphocytes. Recognize peptide-major histocompatibility (MH) (pMH) complexes that are displayed by antigen presenting cells (APC), a prerequisite for efficient T cell adaptive immunity against pathogens. Binding of alpha-beta TR to pMH complex initiates TR-CD3 clustering on the cell surface and intracellular activation of LCK that phosphorylates the ITAM motifs of CD3G, CD3D, CD3E and CD247 enabling the recruitment of ZAP70. In turn ZAP70 phosphorylates LAT, which recruits numerous signaling molecules to form the LAT signalosome. The LAT signalosome propagates signal branching to three major signaling pathways, the calcium, the mitogen-activated protein kinase (MAPK) kinase and the nuclear factor NF-kappa-B (NF-kB) pathways, leading to the mobilization of transcription factors that are critical for gene expression and essential for T cell growth and differentiation. The T cell repertoire is generated in the thymus, by V-(D)-J rearrangement. This repertoire is then shaped by intrathymic selection events to generate a peripheral T cell pool of self-MH restricted, non-autoaggressive T cells. Post-thymic interaction of alpha-beta TR with the pMH complexes shapes TR structural and functional avidity. The protein is T cell receptor beta variable 6-1 of Homo sapiens (Human).